The chain runs to 226 residues: Orotidine 5'-phosphate decarboxylase (226 aa).

Substrate contacts are provided by residues Asp-9, Lys-31, Asp-58–Thr-67, Thr-115, Arg-176, Gln-184, Gly-204, and Arg-205. Lys-60 (proton donor) is an active-site residue.

The protein belongs to the OMP decarboxylase family. Type 1 subfamily. Homodimer.

It catalyses the reaction orotidine 5'-phosphate + H(+) = UMP + CO2. Its pathway is pyrimidine metabolism; UMP biosynthesis via de novo pathway; UMP from orotate: step 2/2. Functionally, catalyzes the decarboxylation of orotidine 5'-monophosphate (OMP) to uridine 5'-monophosphate (UMP). This is Orotidine 5'-phosphate decarboxylase from Wolbachia pipientis subsp. Culex pipiens (strain wPip).